The primary structure comprises 166 residues: Phosphopantetheine adenylyltransferase (166 aa).

T14 serves as a coordination point for substrate. Residues T14–F15 and H22 contribute to the ATP site. Substrate contacts are provided by K46, L78, and R92. Residues G93 to R95, E103, and W128 to S134 contribute to the ATP site.

This sequence belongs to the bacterial CoaD family. As to quaternary structure, homohexamer. It depends on Mg(2+) as a cofactor.

It is found in the cytoplasm. It carries out the reaction (R)-4'-phosphopantetheine + ATP + H(+) = 3'-dephospho-CoA + diphosphate. The protein operates within cofactor biosynthesis; coenzyme A biosynthesis; CoA from (R)-pantothenate: step 4/5. Functionally, reversibly transfers an adenylyl group from ATP to 4'-phosphopantetheine, yielding dephospho-CoA (dPCoA) and pyrophosphate. The sequence is that of Phosphopantetheine adenylyltransferase from Maridesulfovibrio salexigens (strain ATCC 14822 / DSM 2638 / NCIMB 8403 / VKM B-1763) (Desulfovibrio salexigens).